A 973-amino-acid polypeptide reads, in one-letter code: Serine/threonine-protein kinase atg1 (973 aa).

The Protein kinase domain occupies tyrosine 23 to isoleucine 328. Residues isoleucine 29–valine 37 and lysine 52 contribute to the ATP site. Aspartate 166 acts as the Proton acceptor in catalysis. Disordered stretches follow at residues aspartate 338–glutamine 446, arginine 460–arginine 482, glycine 523–threonine 587, and proline 949–lysine 973. Positions glycine 387–proline 407 are enriched in polar residues. Residues glycine 523–arginine 537 are compositionally biased toward polar residues. The segment covering serine 566–tyrosine 582 has biased composition (basic and acidic residues). Residues proline 951–valine 965 are compositionally biased toward polar residues.

The protein belongs to the protein kinase superfamily. Ser/Thr protein kinase family. APG1/unc-51/ULK1 subfamily. As to quaternary structure, homodimer. Forms a ternary complex with ATG13 and ATG17.

The protein localises to the cytoplasm. Its subcellular location is the preautophagosomal structure membrane. It catalyses the reaction L-seryl-[protein] + ATP = O-phospho-L-seryl-[protein] + ADP + H(+). The enzyme catalyses L-threonyl-[protein] + ATP = O-phospho-L-threonyl-[protein] + ADP + H(+). In terms of biological role, serine/threonine protein kinase involved in the cytoplasm to vacuole transport (Cvt) and found to be essential in autophagy, where it is required for the formation of autophagosomes. Involved in the clearance of protein aggregates which cannot be efficiently cleared by the proteasome. Required for selective autophagic degradation of the nucleus (nucleophagy) as well as for mitophagy which contributes to regulate mitochondrial quantity and quality by eliminating the mitochondria to a basal level to fulfill cellular energy requirements and preventing excess ROS production. Also involved in endoplasmic reticulum-specific autophagic process, in selective removal of ER-associated degradation (ERAD) substrates. Plays a key role in ATG9 and ATG23 cycling through the pre-autophagosomal structure and is necessary to promote ATG18 binding to ATG9 through phosphorylation of ATG9. Catalyzes phosphorylation of ATG4, decreasing the interaction between ATG4 and ATG8 and impairing deconjugation of PE-conjugated forms of ATG8. The chain is Serine/threonine-protein kinase atg1 from Aspergillus fumigatus (strain ATCC MYA-4609 / CBS 101355 / FGSC A1100 / Af293) (Neosartorya fumigata).